The chain runs to 1399 residues: DNA-directed RNA polymerase subunit beta' (1399 aa).

Zn(2+)-binding residues include C70, C72, C85, and C88. Mg(2+) is bound by residues D460, D462, and D464. The Zn(2+) site is built by C814, C888, C895, and C898.

It belongs to the RNA polymerase beta' chain family. In terms of assembly, the RNAP catalytic core consists of 2 alpha, 1 beta, 1 beta' and 1 omega subunit. When a sigma factor is associated with the core the holoenzyme is formed, which can initiate transcription. It depends on Mg(2+) as a cofactor. Zn(2+) is required as a cofactor.

It carries out the reaction RNA(n) + a ribonucleoside 5'-triphosphate = RNA(n+1) + diphosphate. Functionally, DNA-dependent RNA polymerase catalyzes the transcription of DNA into RNA using the four ribonucleoside triphosphates as substrates. This chain is DNA-directed RNA polymerase subunit beta', found in Pseudomonas fluorescens (strain ATCC BAA-477 / NRRL B-23932 / Pf-5).